The sequence spans 280 residues: Probable formate transporter (280 aa).

The next 6 helical transmembrane spans lie at 33 to 49 (LSFV…LLAE), 67 to 83 (LVFG…VVIA), 116 to 133 (SWVF…VLAY), 177 to 195 (FWRA…YLAV), 204 to 219 (SFGI…CIGF), and 253 to 272 (LGNI…FTYL).

Belongs to the FNT transporter (TC 1.A.16) family.

It is found in the cell membrane. In terms of biological role, may act as a formate transporter. The protein is Probable formate transporter (fdhC) of Methanobacterium formicicum.